We begin with the raw amino-acid sequence, 266 residues long: Cysteine-rich repeat secretory protein 41 (266 aa).

An N-terminal signal peptide occupies residues 1–26; sequence MSSVFGSVHILAMIAIQLLLTHSVSS. 2 consecutive Gnk2-homologous domains span residues 33–136 and 142–253; these read YLHH…SVAS and YEND…LYPF.

The protein belongs to the cysteine-rich repeat secretory protein family.

It localises to the secreted. This is Cysteine-rich repeat secretory protein 41 (CRRSP41) from Arabidopsis thaliana (Mouse-ear cress).